A 1030-amino-acid chain; its full sequence is Teashirt homolog 2 (1030 aa).

The disordered stretch occupies residues 1 to 120; the sequence is MPRRKQQAPK…THPKLPSEPH (120 aa). Residues 11–42 are a coiled coil; sequence RAAGYAQEEVLKEEEEIKEEEEEEEDSGSVAQ. A compositionally biased stretch (acidic residues) spans 21-37; the sequence is LKEEEEIKEEEEEEEDS. Composition is skewed to polar residues over residues 39-49 and 66-95; these read SVAQHQSSNDT and SCQNSPGSHLSNQDAENESLLSDASDQVSD. Residues 103-120 show a composition bias toward basic and acidic residues; it reads DVSDKKANTHPKLPSEPH. Residue Lys-189 forms a Glycyl lysine isopeptide (Lys-Gly) (interchain with G-Cter in SUMO2) linkage. 2 C2H2-type zinc fingers span residues 216 to 240 and 276 to 300; these read FRCRQCSAAYDTLVELTVHMNETGH and LKCMFCGDSFDSLQDLSVHMIKTKH. The disordered stretch occupies residues 240–266; the sequence is HYQDDNRKKDKLRPTSYSKPRKRAFQD. Glycyl lysine isopeptide (Lys-Gly) (interchain with G-Cter in SUMO2) cross-links involve residues Lys-307 and Lys-316. The segment at 328 to 348 is disordered; the sequence is VNRPCSPDSTTGSLADSFSSQ. The segment covering 334–348 has biased composition (polar residues); it reads PDSTTGSLADSFSSQ. The C2H2-type 3; atypical zinc-finger motif lies at 381–405; that stretch reads LKCMECGSSHDTLQQLTTHMMVTGH. Lys-418 is covalently cross-linked (Glycyl lysine isopeptide (Lys-Gly) (interchain with G-Cter in SUMO2)). A compositionally biased stretch (polar residues) spans 432–459; it reads SLSETPNSESLAPKPSSNSPSECTASTT. Residues 432-488 are disordered; that stretch reads SLSETPNSESLAPKPSSNSPSECTASTTELKKESKKEKGEGIEDEQGVKSEDYEDSL. A compositionally biased stretch (basic and acidic residues) spans 460–482; sequence ELKKESKKEKGEGIEDEQGVKSE. Glycyl lysine isopeptide (Lys-Gly) (interchain with G-Cter in SUMO2) cross-links involve residues Lys-462, Lys-480, Lys-497, and Lys-601. Composition is skewed to basic and acidic residues over residues 608–623 and 633–664; these read DEVVKQCGKESPHEEA and SFSKIEPPSESRKAEPCPLKEEEKPQKEKPEP. 3 disordered regions span residues 608-687, 703-726, and 759-784; these read DEVV…LPSI, KATEPLRSPSCSSPNSSTSPVFHK, and QPIDLTKSKSKRAESSQAQSCTSPPQ. Lys-652 participates in a covalent cross-link: Glycyl lysine isopeptide (Lys-Gly) (interchain with G-Cter in SUMO2). A compositionally biased stretch (low complexity) spans 710-722; that stretch reads SPSCSSPNSSTSP. Positions 773–783 are enriched in polar residues; that stretch reads SSQAQSCTSPP. Residues Lys-796 and Lys-816 each participate in a glycyl lysine isopeptide (Lys-Gly) (interchain with G-Cter in SUMO2) cross-link. Positions 837–907 form a DNA-binding region, homeobox; the sequence is RKGRQSNWNP…NVKYQLRKTG (71 aa). A C2H2-type 4 zinc finger spans residues 922-944; the sequence is FYCSDCASQFRTPSTYISHLESH. Lys-962 participates in a covalent cross-link: Glycyl lysine isopeptide (Lys-Gly) (interchain with G-Cter in SUMO2). 2 disordered regions span residues 965-987 and 1009-1030; these read QEISRVSSAQRSPETIAGEEDTD and LSKTHSKSPEHHSQFVADVDEE. A compositionally biased stretch (polar residues) spans 968 to 977; the sequence is SRVSSAQRSP. The residue at position 976 (Ser-976) is a Phosphoserine. The C2H2-type 5 zinc finger occupies 990-1013; the sequence is FKCKLCRRTFVSKHAVKLHLSKTH.

This sequence belongs to the teashirt C2H2-type zinc-finger protein family. Interacts (via homeobox domain) with APBB1 (via PID domain 1). In terms of processing, sumoylated.

Its subcellular location is the nucleus. In terms of biological role, probable transcriptional regulator involved in developmental processes. May act as a transcriptional repressor (Potential). This is Teashirt homolog 2 (Tshz2) from Mus musculus (Mouse).